The sequence spans 407 residues: Expansin-like protein 2 (407 aa).

A signal peptide spans 1-23; the sequence is MKMKNFLSKSLLVLLIGLIGVKS. Positions 42 to 141 constitute an Expansin-like EG45 domain; it reads HGNCGYEQLT…KKVSCDVTGN (100 aa). 2 disulfides stabilise this stretch: cysteine 45/cysteine 75 and cysteine 78/cysteine 136. N-linked (GlcNAc...) asparagine glycosylation is found at asparagine 70, asparagine 117, and asparagine 387.

Belongs to the expansin family. Expansin A subfamily.

The protein resides in the secreted. Functionally, unlikely to encode with a protein with expansin activity. This chain is Expansin-like protein 2 (expl2), found in Dictyostelium discoideum (Social amoeba).